Reading from the N-terminus, the 400-residue chain is Opsin-3 (400 aa).

Residues 1-38 (MYSGNRSGDQGYWEDGAGAEGAAPAGTRSPAPLFSPTA) are Extracellular-facing. N5 is a glycosylation site (N-linked (GlcNAc...) asparagine). Residues 39 to 63 (YERLALLLGCLALLGVGGNLLVLLL) form a helical membrane-spanning segment. The Cytoplasmic portion of the chain corresponds to 64 to 75 (YSKFPRLRTPTH). The chain crosses the membrane as a helical span at residues 76 to 100 (LFLVNLSLGDLLVSLFGVTFTFASC). Topologically, residues 101–115 (LRNGWVWDAVGCAWD) are extracellular. A disulfide bridge links C112 with C186. The chain crosses the membrane as a helical span at residues 116–135 (GFSGSLFGFVSITTLTVLAY). Over 136 to 151 (ERYIRVVHARVINFSW) the chain is Cytoplasmic. Residues 152–175 (AWRAITYIWLYSLAWAGAPLLGWN) form a helical membrane-spanning segment. Residues 176 to 199 (RYILDIHGLGCTVDWRSKDANDSS) are Extracellular-facing. An N-linked (GlcNAc...) asparagine glycan is attached at N196. Residues 200–227 (FVLFLFLGCLVVPVGIIAHCYGHILYSV) traverse the membrane as a helical segment. Residues 228 to 253 (RMLRCVEDLQTIQVIKMLRYEKKVAK) are Cytoplasmic-facing. The chain crosses the membrane as a helical span at residues 254–277 (MCFLMAFVFLTCWMPYIVTRFLVV). Topologically, residues 278 to 285 (NGYGHLVT) are extracellular. The helical transmembrane segment at 286–310 (PTVSIVSYLFAKSSTVYNPVIYIFM) threads the bilayer. An N6-(retinylidene)lysine modification is found at K297. Residues 311–400 (NRKFRRSLLQ…KVDVIQVRPL (90 aa)) lie on the Cytoplasmic side of the membrane. C323 is lipidated: S-palmitoyl cysteine.

Belongs to the G-protein coupled receptor 1 family. Opsin subfamily. In terms of assembly, interacts with MC1R; the interaction results in a decrease in MC1R-mediated cAMP signaling and ultimately a decrease in melanin production in melanocytes. In terms of tissue distribution, expressed in the eye (at protein level). Expressed in tracheal airway smooth muscle. Expressed in brown adipocyte tissue; expression becomes more abundant during differentiation. Strongly expressed in brain. Highly expressed in the preoptic area and paraventricular nucleus of the hypothalamus. Shows highly patterned expression in other regions of the brain, being enriched in selected regions of the cerebral cortex, cerebellar Purkinje cells, a subset of striatal neurons, selected thalamic nuclei, and a subset of interneurons in the ventral horn of the spinal cord.

The protein resides in the cell membrane. It localises to the cytoplasm. Its function is as follows. G-protein coupled receptor which selectively activates G proteins via ultraviolet A (UVA) light-mediated activation in the skin. Binds both 11-cis retinal and all-trans retinal. Regulates melanogenesis in melanocytes via inhibition of alpha-MSH-induced MC1R-mediated cAMP signaling, modulation of calcium flux, regulation of CAMK2 phosphorylation, and subsequently phosphorylation of CREB, p38, ERK and MITF in response to blue light. Plays a role in melanocyte survival through regulation of intracellular calcium levels and subsequent BCL2/RAF1 signaling. Additionally regulates apoptosis via cytochrome c release and subsequent activation of the caspase cascade. Required for TYR and DCT blue light-induced complex formation in melanocytes. Involved in keratinocyte differentiation in response to blue-light. Required for the UVA-mediated induction of calcium and mitogen-activated protein kinase signaling resulting in the expression of MMP1, MMP2, MMP3, MMP9 and TIMP1 in dermal fibroblasts. Plays a role in light-mediated glucose uptake, mitochondrial respiration and fatty acid metabolism in brown adipocyte tissues. May be involved in photorelaxation of airway smooth muscle cells, via blue-light dependent GPCR signaling pathways. This Mus musculus (Mouse) protein is Opsin-3 (Opn3).